Here is a 558-residue protein sequence, read N- to C-terminus: Formate--tetrahydrofolate ligase (558 aa).

Position 66-73 (66-73 (TPAGEGKT)) interacts with ATP.

It belongs to the formate--tetrahydrofolate ligase family.

It carries out the reaction (6S)-5,6,7,8-tetrahydrofolate + formate + ATP = (6R)-10-formyltetrahydrofolate + ADP + phosphate. It participates in one-carbon metabolism; tetrahydrofolate interconversion. The protein is Formate--tetrahydrofolate ligase of Clostridioides difficile (strain 630) (Peptoclostridium difficile).